Consider the following 444-residue polypeptide: Tryptophan 5-hydroxylase 1 (444 aa).

The ACT domain maps to 19-94 (TLIFSLKNEV…NVLSVTPPDN (76 aa)). At serine 58 the chain carries Phosphoserine; by PKA. 3 residues coordinate L-tryptophan: tyrosine 235, arginine 257, and threonine 265. Histidine 272, histidine 277, and glutamate 317 together coordinate Fe cation. The L-tryptophan site is built by serine 336 and isoleucine 366.

Belongs to the biopterin-dependent aromatic amino acid hydroxylase family. Homotetramer. Interacts with DNAJC12. The cofactor is Fe(2+). Ubiquitinated, leading to its degradation by the proteasome. Ubiquitinated is triggered by phosphorylation. Post-translationally, phosphorylated; triggering degradation by the proteasome.

The enzyme catalyses (6R)-L-erythro-5,6,7,8-tetrahydrobiopterin + L-tryptophan + O2 = 5-hydroxy-L-tryptophan + (4aS,6R)-4a-hydroxy-L-erythro-5,6,7,8-tetrahydrobiopterin. The protein operates within aromatic compound metabolism; serotonin biosynthesis; serotonin from L-tryptophan: step 1/2. Oxidizes L-tryptophan to 5-hydroxy-l-tryptophan in the rate-determining step of serotonin biosynthesis. The sequence is that of Tryptophan 5-hydroxylase 1 (TPH1) from Oryctolagus cuniculus (Rabbit).